The sequence spans 461 residues: BSD domain-containing protein 1 (461 aa).

Phosphoserine is present on residues Ser-123 and Ser-197. Residues Trp-177–Glu-229 form the BSD domain. A disordered region spans residues Lys-239–Arg-384. A compositionally biased stretch (acidic residues) spans Pro-250–Leu-259. The segment covering Leu-295–Thr-318 has biased composition (low complexity). A Phosphothreonine modification is found at Thr-387. Residues Val-398–Phe-430 form a disordered region. Polar residues predominate over residues Asn-402 to Asp-421. Phosphoserine occurs at positions 418, 419, and 449.

The polypeptide is BSD domain-containing protein 1 (BSDC1) (Bos taurus (Bovine)).